The sequence spans 141 residues: Stage V sporulation protein AB (141 aa).

Helical transmembrane passes span 7–27, 45–65, 75–95, and 115–135; these read FIIF…VAFL, FVQA…WETL, WIAV…AAAL, and IIIL…FHWL.

It is found in the cell membrane. This chain is Stage V sporulation protein AB (spoVAB), found in Bacillus subtilis (strain 168).